The chain runs to 215 residues: Probable phosphoglycerate mutase GpmB (215 aa).

Substrate is bound by residues 8-15 (RHGETQWN), 21-22 (QG), Arg-58, 82-85 (ELDM), 104-105 (RR), and 151-152 (GM). Residue His-9 is the Tele-phosphohistidine intermediate of the active site. The active-site Proton donor/acceptor is Glu-82.

This sequence belongs to the phosphoglycerate mutase family. GpmB subfamily.

It carries out the reaction (2R)-2-phosphoglycerate = (2R)-3-phosphoglycerate. Its pathway is carbohydrate degradation; glycolysis; pyruvate from D-glyceraldehyde 3-phosphate: step 3/5. The polypeptide is Probable phosphoglycerate mutase GpmB (Cronobacter sakazakii (strain ATCC BAA-894) (Enterobacter sakazakii)).